A 2962-amino-acid polypeptide reads, in one-letter code: Sex determination and dosage compensation protein sdc-2 (2962 aa).

Disordered regions lie at residues 1–28 (MSDE…ADPD) and 1061–1110 (DKRS…QVDP). Over residues 15-27 (SFNESDSPDEADP) the composition is skewed to acidic residues. Coiled coils occupy residues 995–1085 (LESA…LADK) and 1140–1268 (REER…KRVS). 2 disordered regions span residues 1535 to 1554 (PASL…GSPV) and 2198 to 2227 (LDSS…NQLD). Positions 2212-2225 (FEDSPSEDENDENQ) are enriched in acidic residues.

As to quaternary structure, component of the SDC complex, which consists of sdc-1, sdc-2 and sdc-3. Within the complex, interacts with sdc-1 and sdc-3. Expressed in hermaphrodites (XX), but absent in males (XO) (at protein level).

The protein localises to the chromosome. Component of the SDC complex that functions in sex determination and in X chromosome dosage compensation specifically in hermaphrodite (XX) animals. Required for the recruitment of the condensin I-like dosage compensation complex to the male sex-determining autosomal gene her-1, thereby contributing to its repression and initiating hermaphrodite sexual development. Plays a central role in X-chromosome recognition and in the recruitment and assembly of the dosage compensation complex and the dosage compensation protein dpy-21 onto the X chromosomes in hermaphrodites, which leads to a reduction of X-linked gene transcription and an equalization of X-linked gene expression between the sexes. May confer protection against toxicity induced by heavy metals such as arsenite. The protein is Sex determination and dosage compensation protein sdc-2 of Caenorhabditis elegans.